Reading from the N-terminus, the 159-residue chain is 2-C-methyl-D-erythritol 2,4-cyclodiphosphate synthase (159 aa).

2 residues coordinate a divalent metal cation: D8 and H10. 4-CDP-2-C-methyl-D-erythritol 2-phosphate contacts are provided by residues 8 to 10 (DVH) and 34 to 35 (HS). H42 lines the a divalent metal cation pocket. 4-CDP-2-C-methyl-D-erythritol 2-phosphate contacts are provided by residues 56–58 (DIG), 61–65 (FPDTD), 100–106 (AQAPKMA), 132–135 (TTSE), F139, and R142.

It belongs to the IspF family. In terms of assembly, homotrimer. Requires a divalent metal cation as cofactor.

It catalyses the reaction 4-CDP-2-C-methyl-D-erythritol 2-phosphate = 2-C-methyl-D-erythritol 2,4-cyclic diphosphate + CMP. It participates in isoprenoid biosynthesis; isopentenyl diphosphate biosynthesis via DXP pathway; isopentenyl diphosphate from 1-deoxy-D-xylulose 5-phosphate: step 4/6. Functionally, involved in the biosynthesis of isopentenyl diphosphate (IPP) and dimethylallyl diphosphate (DMAPP), two major building blocks of isoprenoid compounds. Catalyzes the conversion of 4-diphosphocytidyl-2-C-methyl-D-erythritol 2-phosphate (CDP-ME2P) to 2-C-methyl-D-erythritol 2,4-cyclodiphosphate (ME-CPP) with a corresponding release of cytidine 5-monophosphate (CMP). This chain is 2-C-methyl-D-erythritol 2,4-cyclodiphosphate synthase, found in Aliivibrio salmonicida (strain LFI1238) (Vibrio salmonicida (strain LFI1238)).